Consider the following 240-residue polypeptide: MSTLFIADLHLSVQEPAITAGFLHFIQREAIHADALYILGDLFESWIGDDDPEPLYRQVAAALKSLQQQGVPCYFIHGNRDFLLGKRFAEESGMVLLPEENVVELYGRKILILHGDTLCTDDTDYQHFRKKVHNPLIQKLFLWIPLRLRLRIAAYMRNKSQQNNSGKSEHIMDVNSKAVIDAFLRHDVSWMIHGHTHRPAIHSVELPMVTAHRVVLGAWHVEGSMVKVTADNVELITFPF.

5 residues coordinate Mn(2+): aspartate 8, histidine 10, aspartate 41, asparagine 79, and histidine 114. Residue 79–80 (NR) coordinates substrate. 5 residues coordinate substrate: aspartate 122, serine 160, asparagine 164, lysine 167, and histidine 195. 2 residues coordinate Mn(2+): histidine 195 and histidine 197.

Belongs to the LpxH family. Mn(2+) serves as cofactor.

It localises to the cell inner membrane. It carries out the reaction UDP-2-N,3-O-bis[(3R)-3-hydroxytetradecanoyl]-alpha-D-glucosamine + H2O = 2-N,3-O-bis[(3R)-3-hydroxytetradecanoyl]-alpha-D-glucosaminyl 1-phosphate + UMP + 2 H(+). Its pathway is glycolipid biosynthesis; lipid IV(A) biosynthesis; lipid IV(A) from (3R)-3-hydroxytetradecanoyl-[acyl-carrier-protein] and UDP-N-acetyl-alpha-D-glucosamine: step 4/6. Hydrolyzes the pyrophosphate bond of UDP-2,3-diacylglucosamine to yield 2,3-diacylglucosamine 1-phosphate (lipid X) and UMP by catalyzing the attack of water at the alpha-P atom. Involved in the biosynthesis of lipid A, a phosphorylated glycolipid that anchors the lipopolysaccharide to the outer membrane of the cell. This is UDP-2,3-diacylglucosamine hydrolase from Yersinia pseudotuberculosis serotype O:1b (strain IP 31758).